The following is a 706-amino-acid chain: Protein-glutamine gamma-glutamyltransferase 6 (706 aa).

The Ca(2+) site is built by A223, N226, and N228. C274 is an active-site residue. 5 residues coordinate Ca(2+): D303, D305, N307, S309, and D327. Residues H333 and D356 contribute to the active site. Ca(2+) is bound by residues N396, T417, E445, and E450.

Belongs to the transglutaminase superfamily. Transglutaminase family. Ca(2+) serves as cofactor.

The protein localises to the cytoplasm. It carries out the reaction L-glutaminyl-[protein] + L-lysyl-[protein] = [protein]-L-lysyl-N(6)-5-L-glutamyl-[protein] + NH4(+). Its function is as follows. Catalyzes the cross-linking of proteins and the conjugation of polyamines to proteins. The polypeptide is Protein-glutamine gamma-glutamyltransferase 6 (TGM6) (Homo sapiens (Human)).